The primary structure comprises 296 residues: 4-hydroxybenzoate octaprenyltransferase (296 aa).

The next 8 membrane-spanning stretches (helical) occupy residues proline 28–glycine 48, leucine 52–isoleucine 72, alanine 102–serine 122, threonine 145–alanine 167, serine 174–valine 196, methionine 219–phenylalanine 239, leucine 241–tryptophan 261, and phenylalanine 275–leucine 295.

This sequence belongs to the UbiA prenyltransferase family. The cofactor is Mg(2+).

Its subcellular location is the cell inner membrane. The catalysed reaction is all-trans-octaprenyl diphosphate + 4-hydroxybenzoate = 4-hydroxy-3-(all-trans-octaprenyl)benzoate + diphosphate. Its pathway is cofactor biosynthesis; ubiquinone biosynthesis. Its function is as follows. Catalyzes the prenylation of para-hydroxybenzoate (PHB) with an all-trans polyprenyl group. Mediates the second step in the final reaction sequence of ubiquinone-8 (UQ-8) biosynthesis, which is the condensation of the polyisoprenoid side chain with PHB, generating the first membrane-bound Q intermediate 3-octaprenyl-4-hydroxybenzoate. The chain is 4-hydroxybenzoate octaprenyltransferase from Pseudomonas putida (strain W619).